The following is a 353-amino-acid chain: GTPase Obg (353 aa).

Residues 1–159 (MKFIDEATIK…FELYLELKVL (159 aa)) form the Obg domain. The 173-residue stretch at 160-332 (ADVGLLGMPN…LTYAIMEHVE (173 aa)) folds into the OBG-type G domain. Residues 166-173 (GMPNAGKS), 191-195 (FTTLH), 213-216 (DVPG), 284-287 (NKVD), and 313-315 (SAL) contribute to the GTP site. 2 residues coordinate Mg(2+): Ser-173 and Thr-193.

It belongs to the TRAFAC class OBG-HflX-like GTPase superfamily. OBG GTPase family. In terms of assembly, monomer. Mg(2+) is required as a cofactor.

It is found in the cytoplasm. Functionally, an essential GTPase which binds GTP, GDP and possibly (p)ppGpp with moderate affinity, with high nucleotide exchange rates and a fairly low GTP hydrolysis rate. Plays a role in control of the cell cycle, stress response, ribosome biogenesis and in those bacteria that undergo differentiation, in morphogenesis control. The protein is GTPase Obg of Methylobacillus flagellatus (strain ATCC 51484 / DSM 6875 / VKM B-1610 / KT).